The following is a 202-amino-acid chain: Imidazoleglycerol-phosphate dehydratase (202 aa).

It belongs to the imidazoleglycerol-phosphate dehydratase family.

Its subcellular location is the cytoplasm. It carries out the reaction D-erythro-1-(imidazol-4-yl)glycerol 3-phosphate = 3-(imidazol-4-yl)-2-oxopropyl phosphate + H2O. Its pathway is amino-acid biosynthesis; L-histidine biosynthesis; L-histidine from 5-phospho-alpha-D-ribose 1-diphosphate: step 6/9. This chain is Imidazoleglycerol-phosphate dehydratase, found in Sinorhizobium medicae (strain WSM419) (Ensifer medicae).